The chain runs to 974 residues: Pentatricopeptide repeat-containing protein At5g61990, mitochondrial (974 aa).

The transit peptide at 1-31 (MMGSMLFRKRTLVTRANFLLFRSFSVNVEKL) directs the protein to the mitochondrion. PPR repeat units lie at residues 96–130 (KLDS…NWPV), 150–184 (DGVL…ELVP), 185–219 (RLSR…NVVF), 220–250 (DVKT…TEKE), 257–275 (NVDG…GLVP), 276–310 (LKYT…GVSL), 311–345 (DNHT…GINI), 346–380 (KPYM…GLIP), 381–415 (QAQA…NIVI), 416–450 (SPYT…GCRP), 451–485 (NVVI…GIAP), 486–520 (DIFC…GLKP), 521–555 (NAFT…GVLP), 556–590 (NKVL…GILG), 591–625 (DAKT…GIAP), 626–660 (DVFS…GLTP), 661–695 (NVII…GLHP), 696–730 (NAVT…GLVP), 731–761 (DSFV…NKKG), 765–799 (STAP…SFDR), 804–838 (NDVT…NLMP), 839–873 (TVIT…GIEP), 874–908 (DHIM…NAVD), and 914–948 (SIST…QYIP).

It belongs to the PPR family. P subfamily.

The protein localises to the mitochondrion. This is Pentatricopeptide repeat-containing protein At5g61990, mitochondrial from Arabidopsis thaliana (Mouse-ear cress).